The following is a 638-amino-acid chain: MHNHKVSGKQIVSYASFCLGNLGHSAFYGVMSTYFIIFITSGMFSGLNQSVADKLIGLITGLMVLVRIIELVIDPILGNVVDNTKTRWGKFKPWILIGTVVSAALLLILFTGIFGLAQQNWILFAILFVLIYIAFDVFYSLSDVSYWGMVPALSEDSHERGIYTSLGAFSGIIGWNSLPIIVVPLVTGVTYAVTGKHEEGAPGWFAFAAVISALAIICALIVCFGTKEKHNIIRDSAKQKTTLRQVFGAIFHNDQILWPSLAYLLYSLAAVITNGVLFYMYKFVIGKPNDFWVVGIIATIIGCCINPSFPVLNKYIPRKWLFIAGQTCMVLAYVLFIFGHNNVFLMDLGLVLFNINFALLVTVLTLTDAIEYGQLKIGQRNEAVVLAVRPMIDKFAGAVSNALVGYVAIAAGMTGSATAADMTSKGINTFNMMALYIPLALAVLSIVVFSLKVTLSEKKHAQVIEELKSKLAQGEIEKKTSVDTGTKEVTIYAPADGELMQMSSVVDEDGKPFPGKGFAIEPSSGQIYAPFDGTIKFTFGTKHAFEIVSQNGLQVVVHVGLGTVNLRGEGFETFYDDGQTVKKGDKLLEFDRDLALNNGYKDTIVIFYTQPGRIQNSGTIQAGKDIKHGEKVVDVQFK.

Residues Met-1 to Lys-470 form a permease region. Transmembrane regions (helical) follow at residues Phe-27 to Leu-47, Ile-56 to Ile-76, Trp-94 to Phe-114, Trp-121 to Leu-141, Leu-166 to Val-186, Trp-204 to Phe-224, Leu-261 to Tyr-281, Phe-291 to Val-311, Trp-320 to His-340, Val-343 to Val-363, Phe-395 to Gly-415, and Thr-429 to Phe-449. Residues Ser-503 to Gln-610 enclose the PTS EIIA type-1 domain. Position 558 is a phosphohistidine; by HPr (His-558).

In the N-terminal section; belongs to the sodium:galactoside symporter (TC 2.A.2) family.

It localises to the cell membrane. Its function is as follows. Responsible for transport of beta-galactosides into the cell, with the concomitant uptake of protons (symport system), and also for transport of homologous and heterologous exchange of beta-galactosides. The protein is Lactose permease (lacS) of Lactobacillus helveticus (Lactobacillus suntoryeus).